A 141-amino-acid chain; its full sequence is MADTPSSPAGDGGESGGSVREQDRYLPIANISRIMKKALPPNGKIGKDAKDTVQECVSEFISFITSEASDKCQKEKRKTVNGDDLLWAMATLGFEDYLEPLKIYLARYRELEGDNKGSGKSGDGSNRDAGGGVSGEEMPSW.

The tract at residues 1–23 (MADTPSSPAGDGGESGGSVREQD) is disordered. Residue Ala2 is modified to N-acetylalanine. Residues 26–32 (LPIANIS) mediate DNA binding. The subunit association domain (SAD) stretch occupies residues 53–64 (VQECVSEFISFI). The disordered stretch occupies residues 114–141 (DNKGSGKSGDGSNRDAGGGVSGEEMPSW).

The protein belongs to the NFYB/HAP3 subunit family. Heterotrimeric transcription factor composed of three components, NF-YA, NF-YB and NF-YC. NF-YB and NF-YC must interact and dimerize for NF-YA association and DNA binding. Binds directly with DPB3-1. In terms of tissue distribution, ubiquitous. Predominantly expressed in leaves, flowers and siliques.

The protein localises to the nucleus. In terms of biological role, component of the NF-Y/HAP transcription factor complex. The NF-Y complex stimulates the transcription of various genes by recognizing and binding to a CCAAT motif in promoters. The chain is Nuclear transcription factor Y subunit B-1 from Arabidopsis thaliana (Mouse-ear cress).